We begin with the raw amino-acid sequence, 645 residues long: Leucine-rich repeat protein soc-2 homolog (645 aa).

Low complexity predominate over residues 1-19 (MNLCSSGATASTTSLSSTG). 2 disordered regions span residues 1 to 67 (MNLC…AGGS) and 83 to 151 (NSPA…IQAD). Composition is skewed to gly residues over residues 26-49 (GVPGGGAEGGGGDGGSGNSGGGGS) and 88-97 (GAGGASGSTG). Over residues 98–107 (SGQQPTGSNG) the composition is skewed to low complexity. LRR repeat units follow at residues 165–186 (GIKRLDLSKSSITVIPSTVKEC), 188–209 (HLTELYLYSNKIGQLPPEIGCL), 211–232 (SLRNLALNENSLTSLPESLQNC), 234–255 (QLKVLDLRHNKLAEIPPVIYRL), 257–278 (SLTTLYLRFNRITAVADDLRQL), 280–301 (NLTMLSLRENKIRELGSAIGAL), 303–324 (NLTTLDVSHNHLEHLPEDIGNC), 326–347 (NLSALDLQHNELLDIPDSIGNL), 349–371 (SLVRLGMRYNRLSSVPATLKNCK), 372–393 (SMDEFNVEGNGITQLPDGMLAS), 396–417 (GLTTITLSRNQFASYPTGGPAQ), 420–441 (NVYSINLEHNRIDKIPYGIFSR), 444–465 (GLTKLNMKENMLTALPLDIGTW), 467–488 (NMVELNLATNALQKLPDDIMNL), 490–511 (NLEILILSNNMLKKIPNTIGNL), 513–534 (RLRILDLEENRIEVLPHEIGLL), 536–557 (ELQRLILQTNQITMLPRSIGHL), 559–580 (NLTHLSVSENNLQFLPEEIGSL), 582–604 (SLENLYINQNPGLEKLPFELALC), and 606–627 (NLKYLNIDKCPLSTIPPEIQAG).

The protein belongs to the SHOC2 family.

Acts as a Ras effector and participates in MAPK pathway activation. Probably acts as a regulatory subunit of protein phosphatase that specifically dephosphorylates Raf kinase and stimulate Raf activity at specialized signaling complexes upon Ras activation. The chain is Leucine-rich repeat protein soc-2 homolog (Sur-8) from Drosophila yakuba (Fruit fly).